A 207-amino-acid polypeptide reads, in one-letter code: Peptidyl-tRNA hydrolase (207 aa).

Y15 contributes to the tRNA binding site. H20 functions as the Proton acceptor in the catalytic mechanism. Residues F66, N68, and N114 each coordinate tRNA. Residues 187–207 (HTTKPPRPKPARPATAESDKG) are disordered. Over residues 198 to 207 (RPATAESDKG) the composition is skewed to low complexity.

This sequence belongs to the PTH family. As to quaternary structure, monomer.

It is found in the cytoplasm. It carries out the reaction an N-acyl-L-alpha-aminoacyl-tRNA + H2O = an N-acyl-L-amino acid + a tRNA + H(+). Functionally, hydrolyzes ribosome-free peptidyl-tRNAs (with 1 or more amino acids incorporated), which drop off the ribosome during protein synthesis, or as a result of ribosome stalling. In terms of biological role, catalyzes the release of premature peptidyl moieties from peptidyl-tRNA molecules trapped in stalled 50S ribosomal subunits, and thus maintains levels of free tRNAs and 50S ribosomes. This is Peptidyl-tRNA hydrolase from Delftia acidovorans (strain DSM 14801 / SPH-1).